A 416-amino-acid polypeptide reads, in one-letter code: Tumor necrosis factor receptor superfamily member 19 (416 aa).

The N-terminal stretch at 1 to 29 (MALKVLPLHRTVLFAAILFLLHLACKVSC) is a signal peptide. Residues 30-170 (ETGDCRQQEF…TVSSPRDTAL (141 aa)) are Extracellular-facing. TNFR-Cys repeat units lie at residues 33–72 (DCRQ…DAQC) and 74–114 (PCRP…DAVC). Intrachain disulfides connect C34–C46, C49–C62, C52–C72, C75–C89, C92–C106, C95–C114, C117–C135, and C138–C149. The N-linked (GlcNAc...) asparagine glycan is linked to N105. One copy of the TNFR-Cys 3; truncated repeat lies at 116-149 (DCLPGFYRKTKLVGFQDMECVPCGDPPPPYEPHC). Residues 171 to 191 (AAVICSALATVLLALLILCVI) traverse the membrane as a helical segment. The Cytoplasmic portion of the chain corresponds to 192–416 (YCKRQFMEKK…LAMPTAFQDA (225 aa)). A disordered region spans residues 321-416 (LCDSYPELTG…LAMPTAFQDA (96 aa)). 3 stretches are compositionally biased toward polar residues: residues 331–351 (EDTN…SSGG), 360–370 (LESSGNVSEST), and 381–396 (VWEQ…TPSQ).

In terms of assembly, associates with TRAF1, TRAF2, TRAF3 and TRAF5. Interacts with LINGO1. As to expression, highly expressed in adult brain, and in embryos from day 11-17, but not earlier. Detected in embryonic brain and epithelium, and at lower levels in adult heart, lung and liver. In neonatal mice, mainly in hair follicles and neuron-like cells in the cerebellum, but not in the skin epidermis. Isoform 3 was found in embryonic day 17.5 skin but not in brain and liver.

It is found in the cell membrane. The protein localises to the secreted. Functionally, can mediate activation of c-Jun and NF-kappa-B. May promote caspase-independent cell death. Isoform 2 and isoform 3 may act as decoy receptors. This Mus musculus (Mouse) protein is Tumor necrosis factor receptor superfamily member 19 (Tnfrsf19).